Here is a 201-residue protein sequence, read N- to C-terminus: Retinol-binding protein 4 (201 aa).

The N-terminal stretch at 1–18 (MEWVWALVLLAALGSGRG) is a signal peptide. 3 disulfide bridges follow: Cys22/Cys178, Cys88/Cys192, and Cys138/Cys147. Residue Gln116 participates in substrate binding. Arg139 is modified (omega-N-methylarginine).

It belongs to the calycin superfamily. Lipocalin family. In terms of assembly, interacts with TTR. Interaction with TTR prevents its loss by filtration through the kidney glomeruli. Interacts with STRA6.

Its subcellular location is the secreted. In terms of biological role, retinol-binding protein that mediates retinol transport in blood plasma. Delivers retinol from the liver stores to the peripheral tissues. Transfers the bound all-trans retinol to STRA6, that then facilitates retinol transport across the cell membrane. The protein is Retinol-binding protein 4 (RBP4) of Oryctolagus cuniculus (Rabbit).